The sequence spans 222 residues: Sugar fermentation stimulation protein homolog (222 aa).

Belongs to the SfsA family.

The polypeptide is Sugar fermentation stimulation protein homolog (Thermotoga maritima (strain ATCC 43589 / DSM 3109 / JCM 10099 / NBRC 100826 / MSB8)).